We begin with the raw amino-acid sequence, 137 residues long: Methylglyoxal synthase (137 aa).

An MGS-like domain is found at 1–137 (MKIALIAHDR…NIVHGRDRDA (137 aa)). Substrate is bound by residues His8, Lys12, 34-37 (TGTT), and 54-55 (SG). The Proton donor/acceptor role is filled by Asp60. Residue His87 participates in substrate binding.

The protein belongs to the methylglyoxal synthase family.

It carries out the reaction dihydroxyacetone phosphate = methylglyoxal + phosphate. Functionally, catalyzes the formation of methylglyoxal from dihydroxyacetone phosphate. The protein is Methylglyoxal synthase of Bacillus licheniformis (strain ATCC 14580 / DSM 13 / JCM 2505 / CCUG 7422 / NBRC 12200 / NCIMB 9375 / NCTC 10341 / NRRL NRS-1264 / Gibson 46).